We begin with the raw amino-acid sequence, 198 residues long: Recombination protein RecR (198 aa).

The segment at C57–C72 adopts a C4-type zinc-finger fold. The Toprim domain occupies T80–A175.

The protein belongs to the RecR family.

Functionally, may play a role in DNA repair. It seems to be involved in an RecBC-independent recombinational process of DNA repair. It may act with RecF and RecO. In Streptococcus pneumoniae serotype 2 (strain D39 / NCTC 7466), this protein is Recombination protein RecR.